Consider the following 288-residue polypeptide: Peroxisomal membrane protein pex13 (288 aa).

The interval 1-32 (METNQNEKGPSLPSYPAGGIMSVSNSNADTNQ) is disordered. Over residues 22–32 (SVSNSNADTNQ) the composition is skewed to polar residues. The chain crosses the membrane as a helical span at residues 178 to 198 (IYSIVSSLAIILGLVGLPYAI). In terms of domain architecture, SH3 spans 222–288 (DSLEFCKADY…PSNYCSIISR (67 aa)).

It belongs to the peroxin-13 family. Interacts (via SH3 domain) with PEX14 (via SH3-binding motif); forming the PEX13-PEX14 docking complex.

It is found in the peroxisome membrane. Its function is as follows. Component of the PEX13-PEX14 docking complex, a translocon channel that specifically mediates the import of peroxisomal cargo proteins bound to PEX5 receptor. The PEX13-PEX14 docking complex forms a large import pore which can be opened to a diameter of about 9 nm. Mechanistically, PEX5 receptor along with cargo proteins associates with the PEX14 subunit of the PEX13-PEX14 docking complex in the cytosol, leading to the insertion of the receptor into the organelle membrane with the concomitant translocation of the cargo into the peroxisome matrix. The sequence is that of Peroxisomal membrane protein pex13 (pex13) from Schizosaccharomyces pombe (strain 972 / ATCC 24843) (Fission yeast).